Consider the following 467-residue polypeptide: Coiled-coil domain-containing protein 71 (467 aa).

Positions 81–105 (PSQTKLQARAPNPTATSPPASAPRT) are disordered. The span at 88–105 (ARAPNPTATSPPASAPRT) shows a compositional bias: low complexity. Serine 129 is modified (phosphoserine). Disordered stretches follow at residues 211 to 280 (KLRK…GTKT) and 349 to 416 (VRAK…KAWL). Residues 253-265 (GHQSKTNRATGSP) are compositionally biased toward polar residues. Residues 279 to 359 (KTAQAKVART…RAKAKVARTQ (81 aa)) are a coiled coil. Basic residues predominate over residues 349–380 (VRAKAKVARTQPRGRGRPKGSAKARTTRKGQK). A compositionally biased stretch (basic and acidic residues) spans 392-401 (RAEEAKDLPP).

The protein is Coiled-coil domain-containing protein 71 (CCDC71) of Homo sapiens (Human).